Reading from the N-terminus, the 974-residue chain is Mediator of RNA polymerase II transcription subunit 16 (974 aa).

The interval E62–G92 is disordered. A compositionally biased stretch (low complexity) spans S63 to S75. The segment covering V76–G92 has biased composition (polar residues). Positions K889–K893 match the Nuclear localization signal motif.

Belongs to the Mediator complex subunit 16 family. As to quaternary structure, component of the Mediator complex, which is composed of at least 21 subunits that form three structurally distinct submodules. The Mediator head module contains MED6, MED8, MED11, SRB4/MED17, SRB5/MED18, ROX3/MED19, SRB2/MED20 and SRB6/MED22, the middle module contains MED1, MED4, NUT1/MED5, MED7, CSE2/MED9, NUT2/MED10, SRB7/MED21 and SOH1/MED31, and the tail module contains MED2, PGD1/MED3, RGR1/MED14, GAL11/MED15 and SIN4/MED16. The head and the middle modules interact directly with RNA polymerase II, whereas the elongated tail module interacts with gene-specific regulatory proteins. Interacts with HOG1. Phosphorylated by KIN28.

The protein localises to the nucleus. In terms of biological role, component of the Mediator complex, a coactivator involved in the regulated transcription of nearly all RNA polymerase II-dependent genes. Mediator functions as a bridge to convey information from gene-specific regulatory proteins to the basal RNA polymerase II transcription machinery. The Mediator complex, having a compact conformation in its free form, is recruited to promoters by direct interactions with regulatory proteins and serves for the assembly of a functional preinitiation complex with RNA polymerase II and the general transcription factors. The Mediator complex unfolds to an extended conformation and partially surrounds RNA polymerase II, specifically interacting with the unphosphorylated form of the C-terminal domain (CTD) of RNA polymerase II. The Mediator complex dissociates from the RNA polymerase II holoenzyme and stays at the promoter when transcriptional elongation begins. This is Mediator of RNA polymerase II transcription subunit 16 (SIN4) from Saccharomyces cerevisiae (strain ATCC 204508 / S288c) (Baker's yeast).